A 604-amino-acid chain; its full sequence is Aspartate--tRNA(Asp/Asn) ligase (604 aa).

Glu-175 lines the L-aspartate pocket. The interval 199–202 (QQFK) is aspartate. Residues Arg-221 and His-456 each coordinate L-aspartate. 221-223 (RDE) contributes to the ATP binding site. Position 496 (Glu-496) interacts with ATP. An L-aspartate-binding site is contributed by Arg-503. An ATP-binding site is contributed by 548–551 (GVDR).

Belongs to the class-II aminoacyl-tRNA synthetase family. Type 1 subfamily. Homodimer.

It localises to the cytoplasm. The catalysed reaction is tRNA(Asx) + L-aspartate + ATP = L-aspartyl-tRNA(Asx) + AMP + diphosphate. In terms of biological role, aspartyl-tRNA synthetase with relaxed tRNA specificity since it is able to aspartylate not only its cognate tRNA(Asp) but also tRNA(Asn). Reaction proceeds in two steps: L-aspartate is first activated by ATP to form Asp-AMP and then transferred to the acceptor end of tRNA(Asp/Asn). This Methylobacterium sp. (strain 4-46) protein is Aspartate--tRNA(Asp/Asn) ligase.